We begin with the raw amino-acid sequence, 179 residues long: MASQNRDPAAASVAAVRKGAEPCGGAARGPVGKRLQQELMILMTSGDKGISAFPESDNLFKWVGTIHGAAGTVYEDLRYKLSLEFPSGYPYNAPTVKFLTPCYHPNVDTQGNICLDILKDKWSALYDVRTILLSIQSLLGEPNIDSPLNTHAAELWKNPTAFKKYLQETYSKQVSSQDP.

Alanine 2 is modified (N-acetylalanine). A Phosphoserine modification is found at serine 3. The region spanning 30–175 (PVGKRLQQEL…LQETYSKQVS (146 aa)) is the UBC core domain. The active-site Glycyl thioester intermediate is the cysteine 114.

The protein belongs to the ubiquitin-conjugating enzyme family. As to quaternary structure, component of the APC/C complex, composed of at least 14 distinct subunits that assemble into a complex of at least 19 chains with a combined molecular mass of around 1.2 MDa. Within this complex, directly interacts with ANAPC2. In terms of processing, autoubiquitinated by the APC/C complex, leading to its degradation by the proteasome. Its degradation plays a central role in APC/C regulation, allowing cyclin-A accumulation before S phase entry. APC/C substrates inhibit the autoubiquitination of UBE2C/UBCH10 but not its E2 function, hence APC/C remaining active until its substrates have been destroyed.

It catalyses the reaction S-ubiquitinyl-[E1 ubiquitin-activating enzyme]-L-cysteine + [E2 ubiquitin-conjugating enzyme]-L-cysteine = [E1 ubiquitin-activating enzyme]-L-cysteine + S-ubiquitinyl-[E2 ubiquitin-conjugating enzyme]-L-cysteine.. The catalysed reaction is S-ubiquitinyl-[E1 ubiquitin-activating enzyme]-L-cysteine + [acceptor protein]-L-lysine = [E1 ubiquitin-activating enzyme]-L-cysteine + N(6)-monoubiquitinyl-[acceptor protein]-L-lysine.. It participates in protein modification; protein ubiquitination. Accepts ubiquitin from the E1 complex and catalyzes its covalent attachment to other proteins. In vitro catalyzes 'Lys-11'- and 'Lys-48'-linked polyubiquitination. Acts as an essential factor of the anaphase promoting complex/cyclosome (APC/C), a cell cycle-regulated ubiquitin ligase that controls progression through mitosis. Acts by initiating 'Lys-11'-linked polyubiquitin chains on APC/C substrates, leading to the degradation of APC/C substrates by the proteasome and promoting mitotic exit. This is Ubiquitin-conjugating enzyme E2 C (Ube2c) from Mus musculus (Mouse).